We begin with the raw amino-acid sequence, 477 residues long: Ankyrin repeat, SAM and basic leucine zipper domain-containing protein 1 (477 aa).

The tract at residues 1–24 (MATSALRGLAVAGGGESSESEDDG) is disordered. S17, S18, and S20 each carry phosphoserine. 6 ANK repeats span residues 46 to 76 (EKKE…SVDA), 80 to 109 (YGWT…NASF), 112 to 146 (DKQT…DPNV), 150 to 179 (RLMT…EVNT), 183 to 212 (NGYT…NKML), and 216 to 245 (DGKL…PLEG). The SAM domain maps to 274–336 (SYAEFGDLEV…KILAALKELE (63 aa)).

Interacts with DDX4, PIWIL1, RANBP9 and TDRD1.

It is found in the cytoplasm. In terms of biological role, plays a central role during spermatogenesis by repressing transposable elements and preventing their mobilization, which is essential for the germline integrity. Acts via the piRNA metabolic process, which mediates the repression of transposable elements during meiosis by forming complexes composed of piRNAs and Piwi proteins and governs the methylation and subsequent repression of transposons. Its association with pi-bodies suggests a participation in the primary piRNAs metabolic process. Required prior to the pachytene stage to facilitate the production of multiple types of piRNAs, including those associated with repeats involved in the regulation of retrotransposons. May act by mediating protein-protein interactions during germ cell maturation. In Saimiri boliviensis boliviensis (Bolivian squirrel monkey), this protein is Ankyrin repeat, SAM and basic leucine zipper domain-containing protein 1 (ASZ1).